Here is a 160-residue protein sequence, read N- to C-terminus: S-ribosylhomocysteine lyase (160 aa).

Fe cation is bound by residues His57, His61, and Cys127.

It belongs to the LuxS family. In terms of assembly, homodimer. The cofactor is Fe cation.

The enzyme catalyses S-(5-deoxy-D-ribos-5-yl)-L-homocysteine = (S)-4,5-dihydroxypentane-2,3-dione + L-homocysteine. Functionally, involved in the synthesis of autoinducer 2 (AI-2) which is secreted by bacteria and is used to communicate both the cell density and the metabolic potential of the environment. The regulation of gene expression in response to changes in cell density is called quorum sensing. Catalyzes the transformation of S-ribosylhomocysteine (RHC) to homocysteine (HC) and 4,5-dihydroxy-2,3-pentadione (DPD). This Streptococcus uberis (strain ATCC BAA-854 / 0140J) protein is S-ribosylhomocysteine lyase.